A 598-amino-acid chain; its full sequence is MKNIRNFCIIAHIDHGKSTLADRLLDFTGAVTEREKQEQLLDSMDLERERGITIKSHAIQMDYVHEGEEFVLNLIDTPGHVDFSYEVSRSIAACEGALLVVDAAQSIQAQTISNLYLALENDLEIIPVLNKVDLPSANPEEVTDDIVDLLGCDPSEVIPASAKTGLGIKEILDAIINRVPAPSGKVDAPLRALIFDSVYNPFRGVETYFRVINGSIKKGEKIKFVATGKTYDADEVGTLRLKQFPRKEIKTGDVGYLITGIKDAREVKVGDTITSAVNPTTEAVAGFEDVKPMVFAGIYPVDTEDYEDLRSSMEKLQLNDASLVFLPESSAALGFGFRCGFLGMLHLEIIQERLEREFDMTVITTVPNVSYHAYTNKNPDDVILVNNPSDLPEPSSLNRVEEPFIKATIITKADYVGNVMGLCIEKRGEITNQTYLTTERVELTFDMPLAEIVFDFYDRLKTVSRGYASFDYTPIGLRESKLVKVDVLLNANIVDALSALLHVDNAYDIGKKMCEKLKELIPRQQFDIPIQAAIGAKIIARETVKALRKDVTAKCYGGDISRKRKLLEKQKKGKKRMRQVGNVEIPQEAFMAVLKLND.

Positions 2 to 183 (KNIRNFCIIA…AIINRVPAPS (182 aa)) constitute a tr-type G domain. Residues 14–19 (DHGKST) and 130–133 (NKVD) contribute to the GTP site.

This sequence belongs to the TRAFAC class translation factor GTPase superfamily. Classic translation factor GTPase family. LepA subfamily.

The protein resides in the cell inner membrane. The enzyme catalyses GTP + H2O = GDP + phosphate + H(+). Functionally, required for accurate and efficient protein synthesis under certain stress conditions. May act as a fidelity factor of the translation reaction, by catalyzing a one-codon backward translocation of tRNAs on improperly translocated ribosomes. Back-translocation proceeds from a post-translocation (POST) complex to a pre-translocation (PRE) complex, thus giving elongation factor G a second chance to translocate the tRNAs correctly. Binds to ribosomes in a GTP-dependent manner. The polypeptide is Elongation factor 4 (Christiangramia forsetii (strain DSM 17595 / CGMCC 1.15422 / KT0803) (Gramella forsetii)).